The primary structure comprises 622 residues: WD repeat-containing protein 70 (622 aa).

Over residues 37-55 (TAVERSKKTLEAREKEEQI) the composition is skewed to basic and acidic residues. Positions 37-141 (TAVERSKKTL…DNPVKGIPDS (105 aa)) are disordered. The segment covering 67 to 84 (SSSRQKNTDTSSSSSGSE) has biased composition (low complexity). The segment covering 120-132 (SDDEDEEQHEDDD) has biased composition (acidic residues). 7 WD repeats span residues 148–187 (HGTK…ASLQ), 195–236 (CECH…ECVK), 249–289 (GHTA…KHKG), 298–337 (GKRV…HTKF), 344–383 (TPGT…NPLN), 389–434 (ANYF…KVYE), and 437–476 (VTEA…QRGA). The span at 508-533 (REPRQRSTRKQLEKDRLDPVKSHKPE) shows a compositional bias: basic and acidic residues. Disordered stretches follow at residues 508–549 (REPR…GTHG) and 602–622 (AEVE…KRKI). Residues 539–549 (PGRGGRVGTHG) are compositionally biased toward gly residues. The segment covering 604 to 614 (VESDEEETDNE) has biased composition (acidic residues).

It belongs to the WD repeat GAD-1 family.

This is WD repeat-containing protein 70 (wdr70) from Xenopus tropicalis (Western clawed frog).